Here is a 243-residue protein sequence, read N- to C-terminus: DNA repair protein RecO (243 aa).

This sequence belongs to the RecO family.

Functionally, involved in DNA repair and RecF pathway recombination. The polypeptide is DNA repair protein RecO (Thermobifida fusca (strain YX)).